A 94-amino-acid polypeptide reads, in one-letter code: Small polypeptide ROTUNDIFOLIA LIKE 1 (94 aa).

Residues 1–13 show a composition bias toward polar residues; the sequence is MRQCASASSSTSR. A disordered region spans residues 1–26; that stretch reads MRQCASASSSTSRPPEAAGEEGKRRR. Residues 28-59 form a required for DVL/RTFL small polypeptide activity region; sequence RRGWLLQAAAREQRSRFYIFRRCVAMLLCWYK. A helical membrane pass occupies residues 63–82; that stretch reads ITPYNVVPLGIYGLVWFATM.

This sequence belongs to the DVL/RTFL small polypeptides family.

It localises to the cell membrane. Small polypeptide acting as a regulatory molecule which coordinates cellular responses required for differentiation, growth and development, probably by restricting polar cell proliferation in lateral organs. This is Small polypeptide ROTUNDIFOLIA LIKE 1 from Oryza sativa subsp. japonica (Rice).